Here is a 405-residue protein sequence, read N- to C-terminus: Plasma serine protease inhibitor (405 aa).

The first 19 residues, 1–19, serve as a signal peptide directing secretion; the sequence is MRFFPILCLVLFISHGVAS. Positions 20 to 24 are cleaved as a propeptide — removed in mature form; the sequence is RRHSH. Residue Asn-247 is glycosylated (N-linked (GlcNAc...) asparagine).

This sequence belongs to the serpin family. Forms protease inhibiting heterodimers in extracellular body fluids with serine proteases such as activated protein C/coagulation factor V/F5, acrosin/ACR, chymotrypsinogen B/CTRB1, prothrombin/F2, factor Xa/F10, factor XI/F11, kallikrein/KLKB1, tissue kallikrein, trypsin/PRSS1, prostate specific antigen/KLK3, tissue plasminogen activator/PLAT and urinary plasminogen activator/PLAU. Forms membrane-anchored serine proteases inhibiting heterodimers with TMPRSS7 and TMPRSS11E. Interacts with SEMG2. In terms of processing, N-glycosylated; glycans consist of a mixture of sialylated bi- (including sialyl-Lewis X epitopes), tri- and tetra-antennary complex-type chains; affects the maximal heparin- and thrombomodulin-enhanced rates of thrombin inhibition. O-glycosylated; further modified with 2 sialic acid residues. Proteolytically cleaved at the N-terminus; inhibits slightly the heparin- and thrombomodulin-enhanced rates of thrombin inhibition. Post-translationally, proteolytically cleaved. Inhibition of proteases is accompanied by formation of a stable enzyme-inhibitor complex and by degradation of the serpin to lower molecular weight derivatives. As to expression, not detected in blood plasma (at protein level). Expressed in testis, epididymis, seminal vesicles, prostate and ovaries.

The protein localises to the secreted. Its subcellular location is the extracellular space. Its activity is regulated as follows. Its inhibitory activity is greatly enhanced in the presence of glycosaminoglycans, heparin, thrombomodulin and phospholipids vesicles. Functionally, heparin-dependent serine protease inhibitor acting in body fluids and secretions. Inactivates serine proteases by binding irreversibly to their serine activation site. Involved in the regulation of intravascular and extravascular proteolytic activities. Plays hemostatic roles in the blood plasma. Acts as a procoagulant and pro-inflammatory factor by inhibiting the anticoagulant activated protein C factor as well as the generation of activated protein C factor by the thrombin/thrombomodulin complex. Acts as an anticoagulant factor by inhibiting blood coagulation factors like prothrombin, factor XI, factor Xa, plasma kallikrein and fibrinolytic enzymes such as tissue- and urinary-type plasminogen activators. In seminal plasma, inactivates several serine proteases implicated in the reproductive system. Inhibits the serpin acrosin; indirectly protects component of the male genital tract from being degraded by excessive released acrosin. Inhibits tissue- and urinary-type plasminogen activator, prostate-specific antigen and kallikrein activities; has a control on the sperm motility and fertilization. Inhibits the activated protein C-catalyzed degradation of SEMG1 and SEMG2; regulates the degradation of semenogelin during the process of transfer of spermatozoa from the male reproductive tract into the female tract. In urine, inhibits urinary-type plasminogen activator and kallikrein activities. Inactivates membrane-anchored serine proteases activities such as MPRSS7 and TMPRSS11E. Inhibits urinary-type plasminogen activator-dependent tumor cell invasion and metastasis. May also play a non-inhibitory role in seminal plasma and urine as a hydrophobic hormone carrier by its binding to retinoic acid. In Mus musculus (Mouse), this protein is Plasma serine protease inhibitor (Serpina5).